Consider the following 368-residue polypeptide: Ribosomal RNA large subunit methyltransferase M (368 aa).

S-adenosyl-L-methionine-binding positions include serine 189, 222–225 (CPGG), aspartate 241, aspartate 261, and aspartate 278. The active-site Proton acceptor is lysine 307.

The protein belongs to the class I-like SAM-binding methyltransferase superfamily. RNA methyltransferase RlmE family. RlmM subfamily. As to quaternary structure, monomer.

It localises to the cytoplasm. It catalyses the reaction cytidine(2498) in 23S rRNA + S-adenosyl-L-methionine = 2'-O-methylcytidine(2498) in 23S rRNA + S-adenosyl-L-homocysteine + H(+). In terms of biological role, catalyzes the 2'-O-methylation at nucleotide C2498 in 23S rRNA. This chain is Ribosomal RNA large subunit methyltransferase M, found in Yersinia enterocolitica serotype O:8 / biotype 1B (strain NCTC 13174 / 8081).